We begin with the raw amino-acid sequence, 1456 residues long: Leucine-rich repeat-containing protein 9 (1456 aa).

8 LRR repeats span residues 53–78 (FHNL…CLQL), 97–119 (CRNL…LEKL), 120–141 (IKLE…LQTL), 142–164 (KNLK…LDPN), 166–188 (QLEK…NLTK), 190–212 (TRLK…QLCN), 224–248 (LQRL…AMKK), and 264–287 (NEEL…RIKL). Positions 305-325 (SSKGQSDTTPEAEKPRNSEVV) are disordered. The LRR 9 repeat unit spans residues 339–362 (LSALDDRVTFWNKKLHEIEAIYRT). Tyrosine 525 is subject to Phosphotyrosine. LRR repeat units lie at residues 661 to 683 (KPRP…TNIY), 684 to 705 (SHIV…LAKL), 706 to 727 (TGLR…VYHL), 729 to 748 (NLEY…GFRG), 749 to 772 (LMKL…INVL), 776 to 802 (TTSL…VIGR), 806 to 833 (LTHL…KITQ), 876 to 898 (YSKI…LEKL), 899 to 920 (ENLK…LESC), 921 to 942 (VNLE…ITRL), 943 to 965 (TKLS…TFDN), 967 to 991 (LHLH…TFTL), 993 to 1010 (ELYI…IYNL), 1013 to 1037 (LCNL…RFFV), 1082 to 1105 (FIQM…PVDH), 1106 to 1128 (FRNV…LIYL), 1129 to 1151 (PNVK…LKPQ), 1191 to 1214 (MQSL…QLNR), 1215 to 1237 (LRNL…LDNL), 1238 to 1260 (IVLQ…AFSK), 1262 to 1283 (SSLL…LQSL), 1284 to 1307 (VKLE…KLDV), and 1309 to 1335 (PSLR…IFRL).

In Mus musculus (Mouse), this protein is Leucine-rich repeat-containing protein 9 (Lrrc9).